The primary structure comprises 616 residues: 2-[(L-alanin-3-ylcarbamoyl)methyl]-3-(2-aminoethylcarbamoyl)-2-hydroxypropanoate synthase (616 aa).

This sequence belongs to the IucA/IucC family. In terms of assembly, forms a mixture of monomer and dimer in solution.

The enzyme catalyses 2-[(2-aminoethylcarbamoyl)methyl]-2-hydroxybutanedioate + (S)-2,3-diaminopropanoate + ATP = 2-[(L-alanin-3-ylcarbamoyl)methyl]-3-(2-aminoethylcarbamoyl)-2-hydroxypropanoate + AMP + diphosphate. It participates in siderophore biosynthesis. Catalyzes the condensation of L-2,3-diaminopropionic acid (L-Dap) and citryl-diaminoethane to form L-2,3-diaminopropionyl-citryl-diaminoethane, the third step in staphyloferrin B biosynthesis. The chain is 2-[(L-alanin-3-ylcarbamoyl)methyl]-3-(2-aminoethylcarbamoyl)-2-hydroxypropanoate synthase from Staphylococcus aureus (strain NCTC 8325 / PS 47).